Reading from the N-terminus, the 301-residue chain is uncharacterized protein (301 aa).

It belongs to the asfivirus E301R family. Interacts with host IRF3.

Its function is as follows. Plays a role in the inhibition of host innate immune system by acting as a negatively regulator of type I interferon production. Mechanistically, interacts with and prevents host IRF3 nuclear localization to inhibit its transcriptional activity. This is an uncharacterized protein from African swine fever virus (isolate Pig/Kenya/KEN-50/1950) (ASFV).